The following is a 922-amino-acid chain: GPI inositol-deacylase (922 aa).

The Cytoplasmic segment spans residues 1–11 (MFLHSVNLWNL). The chain crosses the membrane as a helical span at residues 12–32 (AFYVFMVFLATLGLWDVFFGF). The Lumenal segment spans residues 33–597 (EENKCSMSYM…GQVVRFHGGA (565 aa)). Ser174 is an active-site residue. Asn363, Asn402, and Asn558 each carry an N-linked (GlcNAc...) asparagine glycan. A helical transmembrane segment spans residues 598-618 (LPAYVVSSILLAYGGQLYSLL). Over 619 to 641 (STGFCLEYGTMLDKEAKPYKVDP) the chain is Cytoplasmic. A helical membrane pass occupies residues 642–662 (FVIMIKFLLGYKWFKELWDAV). Residues 663–668 (LLPELD) lie on the Lumenal side of the membrane. Residues 669–689 (AIVLTSQSMCFPLVSLILFLF) traverse the membrane as a helical segment. Topologically, residues 690–694 (GTCTA) are cytoplasmic. The helical transmembrane segment at 695–715 (YWSGLLSSASVQLLSSLWLAL) threads the bilayer. The Lumenal segment spans residues 716-733 (KRPAELPKDVKVMSPDLP). A helical transmembrane segment spans residues 734-754 (VLTVVFLIISWTTCGALAILL). At 755-816 (SYLYYVFKVV…NDAEDSLRMH (62 aa)) the chain is on the cytoplasmic side. Residues 776–801 (NQPVNPKHSRRSEKKSNHHKDSAIQN) are disordered. Over residues 782-793 (KHSRRSEKKSNH) the composition is skewed to basic residues. A helical membrane pass occupies residues 817 to 837 (STVINLLTWVVLLSMPSLIYW). Topologically, residues 838-853 (SKNLRYYFKLNPDPCK) are lumenal. The chain crosses the membrane as a helical span at residues 854–874 (PLAFLLIPAIAVLGNTHTVSI). The Cytoplasmic segment spans residues 875 to 894 (KSSKLLKTASQFPLPLAVGV). Residues 895 to 915 (IAFGSSHLYRVPCFVIIPLVF) form a helical membrane-spanning segment. The Lumenal portion of the chain corresponds to 916-922 (HSLCNFM).

The protein belongs to the GPI inositol-deacylase family.

It localises to the endoplasmic reticulum membrane. Functionally, GPI inositol-deacylase that catalyzes the remove of the acyl chain linked to the 2-OH position of inositol ring from the GPI-anchored protein (GPI-AP) in the endoplasmic reticulum. Initiates the post-attachment remodeling phase of GPI-AP biogenesis and participates in endoplasmic reticulum (ER)-to-Golgi transport of GPI-anchored protein. This Rattus norvegicus (Rat) protein is GPI inositol-deacylase.